Reading from the N-terminus, the 364-residue chain is Putative agmatine deiminase 1 (364 aa).

The active-site Amidino-cysteine intermediate is the cysteine 356.

This sequence belongs to the agmatine deiminase family.

It carries out the reaction agmatine + H2O = N-carbamoylputrescine + NH4(+). The chain is Putative agmatine deiminase 1 from Listeria monocytogenes serotype 4b (strain F2365).